The following is a 527-amino-acid chain: Laccase-5 (527 aa).

The first 23 residues, 1–23 (MGKYHSFVNVVALSLSLSGRVFG), serve as a signal peptide directing secretion. Positions 25–150 (IGPVTDLTIS…DGLRGPLVVY (126 aa)) constitute a Plastocyanin-like 1 domain. Asn-74 and Asn-77 each carry an N-linked (GlcNAc...) asparagine glycan. 4 residues coordinate Cu cation: His-87, His-89, His-132, and His-134. 2 cysteine pairs are disulfide-bonded: Cys-108-Cys-516 and Cys-140-Cys-230. Residues Asn-156, Asn-209, Asn-233, Asn-242, Asn-276, Asn-317, Asn-358, Asn-366, Asn-393, and Asn-402 are each glycosylated (N-linked (GlcNAc...) asparagine). The region spanning 162–306 (VDDDTTVITL…GGVNSAILRY (145 aa)) is the Plastocyanin-like 2 domain. A Plastocyanin-like 3 domain is found at 373-498 (TVPVLLQILS…AGFAIVWGED (126 aa)). Residues His-425, His-428, His-430, His-480, Cys-481, His-482, and His-486 each contribute to the Cu cation site.

Belongs to the multicopper oxidase family. As to quaternary structure, homodimer. It depends on Cu cation as a cofactor.

It is found in the secreted. It carries out the reaction 4 hydroquinone + O2 = 4 benzosemiquinone + 2 H2O. In terms of biological role, lignin degradation and detoxification of lignin-derived products. The sequence is that of Laccase-5 (LCC5) from Trametes villosa (White-rot fungus).